Reading from the N-terminus, the 280-residue chain is Urease accessory protein UreD (280 aa).

Belongs to the UreD family. In terms of assembly, ureD, UreF and UreG form a complex that acts as a GTP-hydrolysis-dependent molecular chaperone, activating the urease apoprotein by helping to assemble the nickel containing metallocenter of UreC. The UreE protein probably delivers the nickel.

It is found in the cytoplasm. Functionally, required for maturation of urease via the functional incorporation of the urease nickel metallocenter. The sequence is that of Urease accessory protein UreD from Pseudomonas aeruginosa (strain UCBPP-PA14).